The sequence spans 181 residues: DNA-packaging protein NU1 homolog (181 aa).

The protein to phage lambda DNA packaging protein NU1.

The protein is DNA-packaging protein NU1 homolog (nohD) of Escherichia coli (strain K12).